Reading from the N-terminus, the 370-residue chain is Protein maelstrom 2 (370 aa).

The segment at residues 2–68 is a DNA-binding region (HMG box); sequence AQNKPNAFMA…VLERESKTER (67 aa).

This sequence belongs to the maelstrom family.

It localises to the cytoplasm. Its subcellular location is the nucleus. In terms of biological role, involved both in the piRNA and miRNA metabolic processes. As a component of the meiotic nuage, plays a central role during oogenesis by repressing transposable elements and preventing their mobilization, which is essential for the germline integrity. Repression of transposable elements is mediated via the piRNA metabolic process, which mediates the repression of transposable elements during meiosis by forming complexes composed of piRNAs and Piwi proteins and governs the repression of transposons. As a nuclear component, it is required for proper differentiation in the germline stem cell (GSC) lineage by repressing microRNA-7 (miR-7), thereby acting as an indirect regulator of bag-of-marbles (Bam). Acts by binding to the promoter of miR-7 gene and repressing its expression; miR-7 repression alleviates the Bam repression by miR-7, thereby allowing differentiation in the germline stem cell (GSC) lineage. In Drosophila pseudoobscura pseudoobscura (Fruit fly), this protein is Protein maelstrom 2 (mael2).